Here is an 881-residue protein sequence, read N- to C-terminus: MNTTTVSLERPNVHERRRENVATDINVNALVKNASKAIAPLWPIATFVARHPWMGLEHFSFEQVVHRLKLLRDIDLYPSMAMFRAAQRKGELNPKFLEMRLQRWLDEQPLTMPREEAERFCRAALLHEEIPNELLTSSSLKSLAAKMKDMRLRYDSNHLLTRPLSLLLEEQGKEKWARVLDHQMIKWCKLFLDESQALWAMPYREKGFYYAWRKLVINDPSLNKQQRERLKDLPHDPEEALRQALMLLGIPHGEMKGYLEAHLLSLPGWAGMLLWRSQQSGQAHLLLVDYLAIRLSLEWALIAPHLPFAKQKDDDEAFLLPLLAAWMHWGGWTPEKWLQLPQAEQQARLSFAYRFDKIVRGKLWLEAWEDTQEAQLKKRIASHSQNNEPKQAVAQLIFCMDVRSEPFRRHLEQAGPFETYGCAGFFGLPIKTRELDSSHAHASCPVIVEPRHEVQEFTSAENVKKYRGRRNALLSVSHTFKKMKQHLFASLLLPEVSGPLLGLHTLARSIAPSGAGRVFHQFQDNWAQKPATELSLNRESSLETTETTDLPVGFSTEEKVRYVYQLFKGMGLTSRFAPLVVVCGHESTTTNNPYASSLDCGACGGAAGGFNARVFAALCNLKEVREGLAKEGIVIPEDTVFVAAEHMTTVDDLCWLYVPTLSEAAQKAFDMLQGKLEEVSRNANNERLSKLPGLEGKKKDPLAEAHRRAEDWSEIRPEWGLAGNAALIIGRRELTKHCNLEGRVFLHSYDWRKDPSGEALANIITGPVTVAQWINLQYYASTVAPHYYGSGNKTTQTVTAGIGVMQGNASDLLAGLPWQSVMASDEEIFHSPLRLLVIIEAPQQNIERLFEDDPHFRRKVKNGWLRLVSIDPDSGEWKAWR.

4 residues coordinate Zn(2+): Cys399, Asp401, His585, and Cys600.

Belongs to the inorganic carbon transporter (TC 9.A.2) DabA family. Forms a complex with DabB. It depends on Zn(2+) as a cofactor.

The protein resides in the cell membrane. In terms of biological role, part of an energy-coupled inorganic carbon pump. This chain is Probable inorganic carbon transporter subunit DabA, found in Geobacillus sp. (strain WCH70).